A 537-amino-acid chain; its full sequence is MRLSTSALVLGAASSAVAFDQKVLGDLKKPAIDLDLSSWLNFGEEITAEAKAVWEEVSMLAPDAVEAFKKQVIGTKPKKANRRPDNHWDHVVKGADVQSIWVDKNNEKHRKVGGRLDNYNLRAKKVDPSKLGVDKVKQYSGYLDDEEQDKHLFYWFFESRNDPENDPVVLWLNGGPGCSSLTGLFLELGPASINKKIEIVNNPWSWNNNASVIFLDQPVNVGYSYSGGSVSNTVAAGKDIYALLTLFFHQFPEYAKQDFHIAGESYAGHYIPVFANEILSHEDRNINLKSVLIGNGLTDGYTQYEYYRPMACGEGGYPSVLSESECQSMDNALPRCQSLIKGCYESGSAWSCVPASIYCNNAMMGPYQRTGRNVYDIRGNCEDSSNLCYSGLGYIAEYLNRQDVQDALGAEVSSYDSCNMDINRNFLFAGDWMQPYHQVVPNLLEKIPVLIYAGDADFICNWLGNQAWTNKLEWPGHKDFKNADIKNLKVEGKEYGKIKTSGNFTFMQIYGAGHMVPMDQPEASSDFFNRWLGGEWF.

An N-terminal signal peptide occupies residues 1–17; that stretch reads MRLSTSALVLGAASSAV. Residues 18-124 constitute a propeptide that is removed on maturation; that stretch reads AFDQKVLGDL…RLDNYNLRAK (107 aa). 5 disulfides stabilise this stretch: cysteine 178–cysteine 418, cysteine 312–cysteine 326, cysteine 336–cysteine 359, cysteine 343–cysteine 352, and cysteine 381–cysteine 388. The N-linked (GlcNAc...) asparagine glycan is linked to asparagine 209. The active site involves serine 265. Aspartate 457 is a catalytic residue. The N-linked (GlcNAc...) asparagine glycan is linked to asparagine 503. Histidine 514 is an active-site residue.

The protein belongs to the peptidase S10 family.

It localises to the vacuole. The enzyme catalyses Release of a C-terminal amino acid with broad specificity.. Its function is as follows. Vacuolar carboxypeptidase involved in degradation of small peptides. Digests preferentially peptides containing an aliphatic or hydrophobic residue in P1' position, as well as methionine, leucine or phenylalanine in P1 position of ester substrate. This is Carboxypeptidase Y homolog A (CPYA) from Fusarium vanettenii (strain ATCC MYA-4622 / CBS 123669 / FGSC 9596 / NRRL 45880 / 77-13-4) (Fusarium solani subsp. pisi).